Here is a 95-residue protein sequence, read N- to C-terminus: Pyrimidine/purine nucleoside phosphorylase (95 aa).

Belongs to the nucleoside phosphorylase PpnP family.

It carries out the reaction a purine D-ribonucleoside + phosphate = a purine nucleobase + alpha-D-ribose 1-phosphate. The enzyme catalyses adenosine + phosphate = alpha-D-ribose 1-phosphate + adenine. The catalysed reaction is cytidine + phosphate = cytosine + alpha-D-ribose 1-phosphate. It catalyses the reaction guanosine + phosphate = alpha-D-ribose 1-phosphate + guanine. It carries out the reaction inosine + phosphate = alpha-D-ribose 1-phosphate + hypoxanthine. The enzyme catalyses thymidine + phosphate = 2-deoxy-alpha-D-ribose 1-phosphate + thymine. The catalysed reaction is uridine + phosphate = alpha-D-ribose 1-phosphate + uracil. It catalyses the reaction xanthosine + phosphate = alpha-D-ribose 1-phosphate + xanthine. In terms of biological role, catalyzes the phosphorolysis of diverse nucleosides, yielding D-ribose 1-phosphate and the respective free bases. Can use uridine, adenosine, guanosine, cytidine, thymidine, inosine and xanthosine as substrates. Also catalyzes the reverse reactions. The protein is Pyrimidine/purine nucleoside phosphorylase of Yersinia pestis bv. Antiqua (strain Antiqua).